The following is a 330-amino-acid chain: Molybdate/tungstate import ATP-binding protein WtpC (330 aa).

One can recognise an ABC transporter domain in the interval 3–232 (LMVEGISKDY…PASEEVAKFL (230 aa)). 34-41 (GPSGAGKT) provides a ligand contact to ATP.

Belongs to the ABC transporter superfamily. Sulfate/tungstate importer (TC 3.A.1.6) family. The complex is composed of two ATP-binding proteins (WtpC), two transmembrane proteins (WtpB) and a solute-binding protein (WtpA).

It localises to the cell membrane. It carries out the reaction tungstate(in) + ATP + H2O = tungstate(out) + ADP + phosphate + H(+). Functionally, part of the ABC transporter complex WtpABC involved in molybdate/tungstate import. Responsible for energy coupling to the transport system. The polypeptide is Molybdate/tungstate import ATP-binding protein WtpC (wtpC) (Thermococcus kodakarensis (strain ATCC BAA-918 / JCM 12380 / KOD1) (Pyrococcus kodakaraensis (strain KOD1))).